The primary structure comprises 166 residues: Putative peptidyl-prolyl cis-trans isomerase dodo (166 aa).

In terms of domain architecture, WW spans 5–39 (EQLPDGWEKRTSRSTGMSYYLNMYTKESQWDQPTE). The segment at 32-53 (SQWDQPTEPAKKAGGGSAGGGD) is disordered. Positions 44–53 (AGGGSAGGGD) are enriched in gly residues. Residues 55–166 (PDEVHCLHLL…SGLHIILRKA (112 aa)) form the PpiC domain.

It catalyses the reaction [protein]-peptidylproline (omega=180) = [protein]-peptidylproline (omega=0). The protein is Putative peptidyl-prolyl cis-trans isomerase dodo (dod) of Drosophila melanogaster (Fruit fly).